The primary structure comprises 185 residues: Ribosome maturation factor RimM (185 aa).

The 75-residue stretch at 103 to 177 (SEEYYWYEIL…SIIVKKIEWY (75 aa)) folds into the PRC barrel domain.

It belongs to the RimM family. In terms of assembly, binds ribosomal protein uS19.

Its subcellular location is the cytoplasm. An accessory protein needed during the final step in the assembly of 30S ribosomal subunit, possibly for assembly of the head region. Essential for efficient processing of 16S rRNA. May be needed both before and after RbfA during the maturation of 16S rRNA. It has affinity for free ribosomal 30S subunits but not for 70S ribosomes. The protein is Ribosome maturation factor RimM of Petrotoga mobilis (strain DSM 10674 / SJ95).